A 125-amino-acid chain; its full sequence is Prefoldin subunit beta (125 aa).

The protein belongs to the prefoldin subunit beta family. In terms of assembly, heterohexamer of two alpha and four beta subunits.

The protein localises to the cytoplasm. Functionally, molecular chaperone capable of stabilizing a range of proteins. Seems to fulfill an ATP-independent, HSP70-like function in archaeal de novo protein folding. This chain is Prefoldin subunit beta, found in Pyrobaculum calidifontis (strain DSM 21063 / JCM 11548 / VA1).